Consider the following 189-residue polypeptide: dCTP deaminase (189 aa).

DCTP is bound by residues 112 to 117 (KSTYAR), 136 to 138 (TLE), Q157, Y171, and Q181. E138 functions as the Proton donor/acceptor in the catalytic mechanism.

It belongs to the dCTP deaminase family. Homotrimer.

The enzyme catalyses dCTP + H2O + H(+) = dUTP + NH4(+). It functions in the pathway pyrimidine metabolism; dUMP biosynthesis; dUMP from dCTP (dUTP route): step 1/2. In terms of biological role, catalyzes the deamination of dCTP to dUTP. In Xanthomonas axonopodis pv. citri (strain 306), this protein is dCTP deaminase.